The following is a 392-amino-acid chain: MSVIKLVDLDLKNKRVFIRADLNVPVKDGKVTSDARITASMATINHCLKQGAKVMVTSHLGRPEEGVWTEENSLQPVADDIARRLGKPVRLIKDWVEGGFEVASGELVVLENCRINKGEKKNLEETAKKYASLCDVFVMDAFGTAHRAEASTHGIAKYAPIACAGILLTEELDALTKALHQPAHPLVAIVGGSKVSTKLTVLESLAEKVDQLVVGGGIANTFLKAAGNNIGKSLCEDELVPVAKSLMDKMNKRNATIPIAVDVVVGKKFAEDEAAVLKAANAVSDDDMIFDIGPESAQELVDIIMKAGTVVWNGPVGVFEFDQFGEGTRAIAKAIAETDAFTLAGGGDTIAAIQKYDIYDKVSYISTAGGAFLEFLEGKKLPAVEILELRAK.

Substrate-binding positions include 21-23 (DLN), Arg-36, 59-62 (HLGR), Arg-114, and Arg-147. ATP-binding positions include Lys-198, Glu-320, and 346-349 (GGDT).

Belongs to the phosphoglycerate kinase family. Monomer.

It localises to the cytoplasm. It carries out the reaction (2R)-3-phosphoglycerate + ATP = (2R)-3-phospho-glyceroyl phosphate + ADP. The protein operates within carbohydrate degradation; glycolysis; pyruvate from D-glyceraldehyde 3-phosphate: step 2/5. In Nitrosomonas europaea (strain ATCC 19718 / CIP 103999 / KCTC 2705 / NBRC 14298), this protein is Phosphoglycerate kinase.